We begin with the raw amino-acid sequence, 347 residues long: Transcription factor JunD (347 aa).

The disordered stretch occupies residues 1 to 43; that stretch reads METPFYGDEALSGLGGGASGSGGSFASPGRLFPGAPPTAAAGS. Over residues 13–23 the composition is skewed to gly residues; it reads GLGGGASGSGG. Positions 27–39 match the Menin-binding motif (MBM) motif; it reads SPGRLFPGAPPTA. An MAP kinase docking motif; essential for its phosphorylation motif is present at residues 46 to 55; sequence KKDALTLSLS. The tract at residues 62-86 is disordered; sequence LKPAAAPPPTPLRADGAPSAAPPDG. Residues 73–86 show a composition bias toward low complexity; that stretch reads LRADGAPSAAPPDG. Ser-90 is subject to Phosphoserine. Ser-100 carries the post-translational modification Phosphoserine; by MAPK8. Thr-117 is modified (phosphothreonine). Positions 244–264 are disordered; it reads QTVPDVPSFGESPPLSPIDMD. Ser-251, Ser-255, and Ser-259 each carry phosphoserine. The segment at 268-295 is basic motif; the sequence is RIKAERKRLRNRIAASKCRKRKLERISR. The region spanning 268-331 is the bZIP domain; the sequence is RIKAERKRLR…AQLKQKVLSH (64 aa). Residues 296–324 are leucine-zipper; it reads LEEKVKTLKSQNTELASTASLLREQVAQL.

The protein belongs to the bZIP family. Jun subfamily. In terms of assembly, heterodimer; binds DNA as a heterodimer. Component of an AP-1 transcription factor complex composed of JUN-FOS heterodimers. As part of the AP-1 transcription factor complex, forms heterodimers with FOS proteins, thereby binding to the AP-1 consensus sequence and stimulating transcription. Forms heterodimers with FOSB; thereby binding to the AP-1 consensus sequence. Interacts (via MBM motif) with MEN1; this interaction represses transcriptional activation. Interacts with MAPK10; this interaction is inhibited in the presence of MEN1. Post-translationally, phosphorylated by MAP kinases MAPK8 and MAPK10; phosphorylation is inhibited in the presence of MEN1.

The protein resides in the nucleus. In terms of biological role, transcription factor binding AP-1 sites. Heterodimerizes with proteins of the FOS family to form an AP-1 transcription factor complex, thereby enhancing their DNA binding activity to an AP-1 consensus sequence 3'-TGA[GC]TCA-5' and enhancing their transcriptional activity. The polypeptide is Transcription factor JunD (JUND) (Homo sapiens (Human)).